The following is a 180-amino-acid chain: Large ribosomal subunit protein uL5 (180 aa).

This sequence belongs to the universal ribosomal protein uL5 family. In terms of assembly, part of the 50S ribosomal subunit; part of the 5S rRNA/L5/L18/L25 subcomplex. Contacts the 5S rRNA and the P site tRNA. Forms a bridge to the 30S subunit in the 70S ribosome.

Its function is as follows. This is one of the proteins that bind and probably mediate the attachment of the 5S RNA into the large ribosomal subunit, where it forms part of the central protuberance. In the 70S ribosome it contacts protein S13 of the 30S subunit (bridge B1b), connecting the 2 subunits; this bridge is implicated in subunit movement. Contacts the P site tRNA; the 5S rRNA and some of its associated proteins might help stabilize positioning of ribosome-bound tRNAs. This Mesoplasma florum (strain ATCC 33453 / NBRC 100688 / NCTC 11704 / L1) (Acholeplasma florum) protein is Large ribosomal subunit protein uL5.